Consider the following 917-residue polypeptide: MQAKATDSRQEPTLNMDTNARRNFIKFHAKLGEKPATTVRFFDHTDRYTVHGSDDCELVAKIVYKSTAFIGALLPDDKKETLQFVSMSKGNFELAVRELLLVRNYRVEVYVKNSSDWEIEYRGSPGNLLQFEDILFSNKEVLVGNSIISLLVKLDGGGQRRVGVASVEQNDCKFQLLEFLDDDFFTELEATVVLLGPKECLLPSIEGEYSAVKTLLDRNGVMITMPKKSGDNDLLQDLNRLLRFAKGQQEDATGLKELQLQLASNALKTAIKYLDLVNDAGNLGHYEIKQLDLNRFVHLDSAAVAALNIMPKPGTHPSMPSYRWQSVLGVLDHCRTPQGHRLMGQWVKQPLRSRNILNDRHNIVQCLLESPDTMETLSLDYLKRIPDILMLTKKLMRRKANLQDLFRIYQVILRTPKILKVLHELDNSTIESVICAPFKSFLKDLTGLKQMVEQVVDFEAIERGEYLVKASFDSRLMELQQMMTELYSKMEELQFKCSQELNLDGKNQVKLESVAKLGHHFRITVKDDSVLRKNKNYRIVDVIKGGVRFTSDKLEGYADEFASCRTRYEEQQLSIVEEIIHVAVGYAAPLTLLNNELAQLDCLVSFAIAARSAPTPYVRPKMLEEGARELVLEDVRHPCLELQEHVNFIANSVDFKKEECNMFIITGPNMGGKSTYIRSVGTAVLMAHIGAFVPCSLATISMVDSILGRVGASDNIIKGLSTFMVEMIETSGIIRTATDKSLVIIDELGRGTSTYEGCGIAWSIAEHLAKETKCFTLFATHFHEITKLAETLSTVKNCHMAAVADADDFTLLYQVRSGVMEKSFGIQVARLANFPEHVVQNAQEVYNEFEDEHVDKQKKEDKALLEKIQVAIQQLSTAGNNVDINVEDLTQLVTQFTKDIEQLDSDYFKSVLATSEA.

667 to 674 (GPNMGGKS) serves as a coordination point for ATP.

It belongs to the DNA mismatch repair MutS family. Heterodimer of Msh2/Spel and Msh6.

It localises to the nucleus. In terms of biological role, involved in postreplication mismatch repair. Binds specifically to DNA containing mismatched nucleotides thus providing a target for the excision repair processes characteristic of postreplication mismatch repair. In Drosophila melanogaster (Fruit fly), this protein is DNA mismatch repair protein spellchecker 1 (spel1).